We begin with the raw amino-acid sequence, 443 residues long: DILAAFRVTPQPGVPPEEAGAAVAAESSTGTWTTVWTDGLTSLDRYKGRCYHIEPVPGETDQYICYVAYPLDLFEEGSVTNMFTSIVGNVFGFKALRALRLEDLRIPPAYIKTFQGPPHGVQVERDKLNKYGRPLLGCTIKPKLGLSAKNYGRAVYECLRGGLDFTKDDENVNSQPFMRWRDRFLFCAEALYKAQAETGEIKGHYLNATAGTCEEMIKRAVFARELGVPIVMHDYLTGGFTANTSLAHYCRDNGLLLHIHRAMHAVIDRQKNHGIHFRVLAKALRMSGGDHIHSGTVVGKLEGERDITLGFVDLLRDDFIEKDRSRGIYFTQDWVSLPGVIPVASGGIHVWHMPALTEIFGDDSVLQFGGGTLGHPWGNAPGAVANRVALEACVQARNEGRDLAAEGNAIIREASKWSPELAAACEVWKEIKFEFKAVDTLDK.

Substrate contacts are provided by asparagine 89 and threonine 139. The active-site Proton acceptor is the lysine 141. Position 143 (lysine 143) interacts with substrate. Lysine 167, aspartate 169, and glutamate 170 together coordinate Mg(2+). N6-carboxylysine is present on lysine 167. Residue histidine 260 is the Proton acceptor of the active site. Residues arginine 261, histidine 293, and serine 345 each coordinate substrate.

The protein belongs to the RuBisCO large chain family. Type I subfamily. As to quaternary structure, heterohexadecamer of 8 large chains and 8 small chains; disulfide-linked. The disulfide link is formed within the large subunit homodimers. Mg(2+) is required as a cofactor. Post-translationally, the disulfide bond which can form in the large chain dimeric partners within the hexadecamer appears to be associated with oxidative stress and protein turnover.

Its subcellular location is the plastid. It is found in the chloroplast. The catalysed reaction is 2 (2R)-3-phosphoglycerate + 2 H(+) = D-ribulose 1,5-bisphosphate + CO2 + H2O. It catalyses the reaction D-ribulose 1,5-bisphosphate + O2 = 2-phosphoglycolate + (2R)-3-phosphoglycerate + 2 H(+). In terms of biological role, ruBisCO catalyzes two reactions: the carboxylation of D-ribulose 1,5-bisphosphate, the primary event in carbon dioxide fixation, as well as the oxidative fragmentation of the pentose substrate in the photorespiration process. Both reactions occur simultaneously and in competition at the same active site. The sequence is that of Ribulose bisphosphate carboxylase large chain from Buddleja davidii (Butterfly bush).